Reading from the N-terminus, the 252-residue chain is Orotidine 5'-phosphate decarboxylase (252 aa).

Residues Asp26, Lys48, 75–84 (DLKFHDIPNT), Thr135, Arg196, Gln205, Gly225, and Arg226 contribute to the substrate site. The Proton donor role is filled by Lys77.

Belongs to the OMP decarboxylase family. Type 1 subfamily. In terms of assembly, homodimer.

The catalysed reaction is orotidine 5'-phosphate + H(+) = UMP + CO2. The protein operates within pyrimidine metabolism; UMP biosynthesis via de novo pathway; UMP from orotate: step 2/2. In terms of biological role, catalyzes the decarboxylation of orotidine 5'-monophosphate (OMP) to uridine 5'-monophosphate (UMP). This is Orotidine 5'-phosphate decarboxylase from Sodalis glossinidius (strain morsitans).